We begin with the raw amino-acid sequence, 330 residues long: Phenylalanine--tRNA ligase alpha subunit (330 aa).

Glutamate 246 is a Mg(2+) binding site.

This sequence belongs to the class-II aminoacyl-tRNA synthetase family. Phe-tRNA synthetase alpha subunit type 1 subfamily. Tetramer of two alpha and two beta subunits. The cofactor is Mg(2+).

The protein resides in the cytoplasm. It catalyses the reaction tRNA(Phe) + L-phenylalanine + ATP = L-phenylalanyl-tRNA(Phe) + AMP + diphosphate + H(+). The protein is Phenylalanine--tRNA ligase alpha subunit of Wolinella succinogenes (strain ATCC 29543 / DSM 1740 / CCUG 13145 / JCM 31913 / LMG 7466 / NCTC 11488 / FDC 602W) (Vibrio succinogenes).